Reading from the N-terminus, the 145-residue chain is D-aminoacyl-tRNA deacylase (145 aa).

Positions Gly137 to Pro138 match the Gly-cisPro motif, important for rejection of L-amino acids motif.

The protein belongs to the DTD family. Homodimer.

The protein resides in the cytoplasm. The catalysed reaction is glycyl-tRNA(Ala) + H2O = tRNA(Ala) + glycine + H(+). It catalyses the reaction a D-aminoacyl-tRNA + H2O = a tRNA + a D-alpha-amino acid + H(+). Functionally, an aminoacyl-tRNA editing enzyme that deacylates mischarged D-aminoacyl-tRNAs. Also deacylates mischarged glycyl-tRNA(Ala), protecting cells against glycine mischarging by AlaRS. Acts via tRNA-based rather than protein-based catalysis; rejects L-amino acids rather than detecting D-amino acids in the active site. By recycling D-aminoacyl-tRNA to D-amino acids and free tRNA molecules, this enzyme counteracts the toxicity associated with the formation of D-aminoacyl-tRNA entities in vivo and helps enforce protein L-homochirality. The polypeptide is D-aminoacyl-tRNA deacylase (Pseudomonas syringae pv. syringae (strain B728a)).